Consider the following 153-residue polypeptide: 3-hydroxyacyl-[acyl-carrier-protein] dehydratase FabZ (153 aa).

Residue His54 is part of the active site.

The protein belongs to the thioester dehydratase family. FabZ subfamily.

It is found in the cytoplasm. The enzyme catalyses a (3R)-hydroxyacyl-[ACP] = a (2E)-enoyl-[ACP] + H2O. Its function is as follows. Involved in unsaturated fatty acids biosynthesis. Catalyzes the dehydration of short chain beta-hydroxyacyl-ACPs and long chain saturated and unsaturated beta-hydroxyacyl-ACPs. The polypeptide is 3-hydroxyacyl-[acyl-carrier-protein] dehydratase FabZ (Chlamydia pneumoniae (Chlamydophila pneumoniae)).